The chain runs to 247 residues: tRNA pseudouridine synthase A (247 aa).

The Nucleophile role is filled by Asp57. Residue Tyr115 participates in substrate binding.

This sequence belongs to the tRNA pseudouridine synthase TruA family. As to quaternary structure, homodimer.

The catalysed reaction is uridine(38/39/40) in tRNA = pseudouridine(38/39/40) in tRNA. In terms of biological role, formation of pseudouridine at positions 38, 39 and 40 in the anticodon stem and loop of transfer RNAs. This is tRNA pseudouridine synthase A from Chlorobaculum tepidum (strain ATCC 49652 / DSM 12025 / NBRC 103806 / TLS) (Chlorobium tepidum).